The sequence spans 481 residues: O-phosphoseryl-tRNA(Sec) selenium transferase (481 aa).

Residues Met-1 to Glu-36 form a tetramerization region. A pyridoxal 5'-phosphate-binding site is contributed by Arg-69. The interval Gly-90–Pro-100 is phosphate loop (P-loop). Arg-91, Ser-92, and Gln-99 together coordinate substrate. An N6-(pyridoxal phosphate)lysine modification is found at Lys-277. A substrate-binding site is contributed by Arg-306.

It belongs to the SepSecS family. As to quaternary structure, homotetramer formed by a catalytic dimer and a non-catalytic dimer serving as a binding platform that orients tRNASec for catalysis. Each tetramer binds the CCA ends of two tRNAs which point to the active sites of the catalytic dimer. Pyridoxal 5'-phosphate is required as a cofactor.

It is found in the cytoplasm. It catalyses the reaction O-phospho-L-seryl-tRNA(Sec) + selenophosphate + H2O = L-selenocysteinyl-tRNA(Sec) + 2 phosphate. The protein operates within aminoacyl-tRNA biosynthesis; selenocysteinyl-tRNA(Sec) biosynthesis; selenocysteinyl-tRNA(Sec) from L-seryl-tRNA(Sec) (archaeal/eukaryal route): step 2/2. In terms of biological role, converts O-phosphoseryl-tRNA(Sec) to selenocysteinyl-tRNA(Sec) required for selenoprotein biosynthesis. The protein is O-phosphoseryl-tRNA(Sec) selenium transferase (secs-1) of Caenorhabditis elegans.